The chain runs to 111 residues: UPF0339 protein BP0521 (111 aa).

A run of 2 repeats spans residues 9 to 57 (ASGT…RYQR) and 60 to 108 (AKDG…TKDQ). The disordered stretch occupies residues 86-111 (TQARDNGIASVKSNAPGAPTKDQTQA).

This sequence belongs to the UPF0339 family. Duplicated subfamily.

The sequence is that of UPF0339 protein BP0521 from Bordetella pertussis (strain Tohama I / ATCC BAA-589 / NCTC 13251).